The sequence spans 461 residues: Photosystem II CP43 reaction center protein (461 aa).

Positions 1–2 (ME) are excised as a propeptide. Thr-3 carries the post-translational modification N-acetylthreonine. Phosphothreonine is present on Thr-3. 5 helical membrane passes run 57–81 (LFEV…PHLA), 122–143 (LLGP…KDRN), 166–188 (KALY…RKIS), 243–263 (KPFA…LSYS), and 279–300 (WFNN…ASQA). Glu-355 is a [CaMn4O5] cluster binding site. Residues 435–459 (RARAAAAGFEKGIDRDFEPVLSMTP) traverse the membrane as a helical segment.

It belongs to the PsbB/PsbC family. PsbC subfamily. PSII is composed of 1 copy each of membrane proteins PsbA, PsbB, PsbC, PsbD, PsbE, PsbF, PsbH, PsbI, PsbJ, PsbK, PsbL, PsbM, PsbT, PsbX, PsbY, PsbZ, Psb30/Ycf12, at least 3 peripheral proteins of the oxygen-evolving complex and a large number of cofactors. It forms dimeric complexes. The cofactor is Binds multiple chlorophylls and provides some of the ligands for the Ca-4Mn-5O cluster of the oxygen-evolving complex. It may also provide a ligand for a Cl- that is required for oxygen evolution. PSII binds additional chlorophylls, carotenoids and specific lipids..

The protein resides in the plastid. It is found in the chloroplast thylakoid membrane. Its function is as follows. One of the components of the core complex of photosystem II (PSII). It binds chlorophyll and helps catalyze the primary light-induced photochemical processes of PSII. PSII is a light-driven water:plastoquinone oxidoreductase, using light energy to abstract electrons from H(2)O, generating O(2) and a proton gradient subsequently used for ATP formation. This is Photosystem II CP43 reaction center protein from Trachelium caeruleum (Blue throatwort).